The chain runs to 163 residues: Zinc finger A20 and AN1 domain-containing stress-associated protein 3 (163 aa).

An A20-type zinc finger spans residues 7 to 41 (LQEPRLCANNCGFFGSTATQNLCSKCFRDLQHQEQ). Zn(2+) is bound by residues Cys-13, Cys-17, Cys-29, and Cys-32. The interval 57 to 101 (VGAAASSSVSPPPPPPADSKEIVEAKSEKRAAAEPEEADGPPQDP) is disordered. Over residues 74–89 (DSKEIVEAKSEKRAAA) the composition is skewed to basic and acidic residues. The AN1-type zinc-finger motif lies at 98-144 (PQDPKRCLTCRRRVGITGFRCRCGFVFCGTHRYAEQHECSFDFKRMG). 8 residues coordinate Zn(2+): Cys-104, Cys-107, Cys-118, Cys-120, Cys-125, His-128, His-134, and Cys-136.

May be involved in environmental stress response. The sequence is that of Zinc finger A20 and AN1 domain-containing stress-associated protein 3 (SAP3) from Arabidopsis thaliana (Mouse-ear cress).